A 353-amino-acid chain; its full sequence is Vomeronasal type-1 receptor 1 (353 aa).

Topologically, residues methionine 1–threonine 56 are extracellular. A helical transmembrane segment spans residues glycine 57 to glycine 77. Residues histidine 78–aspartate 84 lie on the Cytoplasmic side of the membrane. A helical transmembrane segment spans residues leucine 85–glutamine 105. Residues threonine 106–threonine 132 lie on the Extracellular side of the membrane. Asparagine 117 carries an N-linked (GlcNAc...) asparagine glycan. Residues arginine 133 to serine 153 form a helical membrane-spanning segment. At isoleucine 154–aspartate 169 the chain is on the cytoplasmic side. Residues phenylalanine 170–valine 190 traverse the membrane as a helical segment. Residues asparagine 191–serine 226 lie on the Extracellular side of the membrane. Residue asparagine 198 is glycosylated (N-linked (GlcNAc...) asparagine). The helical transmembrane segment at proline 227–tyrosine 247 threads the bilayer. Residues arginine 248–threonine 274 are Cytoplasmic-facing. Residues isoleucine 275–tryptophan 295 form a helical membrane-spanning segment. Residues threonine 296–glycine 303 are Extracellular-facing. A helical transmembrane segment spans residues glutamine 304–valine 324. Over leucine 325–proline 353 the chain is Cytoplasmic.

The protein belongs to the G-protein coupled receptor 1 family.

It is found in the cell membrane. Its function is as follows. Putative pheromone receptor. This is Vomeronasal type-1 receptor 1 (VN1R1) from Gorilla gorilla gorilla (Western lowland gorilla).